A 471-amino-acid chain; its full sequence is Paraneoplastic antigen-like protein 8A (471 aa).

Disordered regions lie at residues 188 to 300 (SAAG…EGSA) and 321 to 471 (ASRG…PSAV). A compositionally biased stretch (basic residues) spans 238–247 (HSRRKRQKKT). The segment covering 256–269 (KKSQGSHSHSSASL) has biased composition (low complexity). The segment covering 270 to 287 (KHPEADDGKNRERLEHVR) has biased composition (basic and acidic residues).

Belongs to the PNMA family.

The protein is Paraneoplastic antigen-like protein 8A (PNMA8A) of Bos taurus (Bovine).